We begin with the raw amino-acid sequence, 139 residues long: Actin-depolymerizing factor 4 (139 aa).

In terms of domain architecture, ADF-H spans 5 to 139 (SSGVAIHDDC…SLDALKDRVK (135 aa)).

Belongs to the actin-binding proteins ADF family. Interacts with LECRK1 (via kinase domain).

It localises to the cytoplasm. It is found in the cytoskeleton. In terms of biological role, actin-depolymerizing protein. Severs actin filaments (F-actin) and binds to actin monomers. Involved in innate immunity. Required for the expression of defense-related genes PR1A, LOX2 and CHS1 upon biotic stresses. Required for basal resistance to the fungal blast (Magnaporthe grisea), bacterial blight (Xanthomonas oryzae pv. oryzae, Xoo) and the herbivorous insect brown planthopper (Nilaparvata lugens, BPH). Involved in the promotion of seed germination. Required for the expression of alpha-amylase genes during seed germination. This chain is Actin-depolymerizing factor 4 (ADF4), found in Oryza sativa subsp. japonica (Rice).